Reading from the N-terminus, the 446-residue chain is Nuclear distribution protein PAC1-1 (446 aa).

The LisH domain occupies 9–41 (QAEELHKSLIAYLSSINASQSVTTLREELQIGD). Residues 60–86 (ISVVRLQKRILDLESKIASLQAELDSA) are a coiled coil. WD repeat units lie at residues 112–153 (SHRG…RTLK), 155–195 (HTRT…ANIR), 199–239 (GHDH…CVKT), 242–281 (TQGDWVRDVFPSFDGKWLVSGGRDQAATIWEVSSGEARAS), 284–344 (GHEN…IKTL), 346–385 (GHNNWVRGLVFHPGGKYLFSVGDDKTIRCWDLSQEGKLVK), 390–430 (AHEH…TGFR), and 432–446 (VIATGSADSCVRVFM).

This sequence belongs to the WD repeat LIS1/nudF family. In terms of assembly, self-associates. Interacts with NDL1 and dynein.

It localises to the cytoplasm. The protein localises to the cytoskeleton. Its subcellular location is the spindle pole. Functionally, positively regulates the activity of the minus-end directed microtubule motor protein dynein. May enhance dynein-mediated microtubule sliding by targeting dynein to the microtubule plus end. Required for nuclear migration during vegetative growth as well as development. Required for retrograde early endosome (EE) transport from the hyphal tip. Required for localization of dynein to the mitotic spindle poles. Recruits additional proteins to the dynein complex at SPBs. In Uncinocarpus reesii (strain UAMH 1704), this protein is Nuclear distribution protein PAC1-1.